Reading from the N-terminus, the 1044-residue chain is Pre-mRNA-splicing factor ATP-dependent RNA helicase DEAH1 (1044 aa).

The disordered stretch occupies residues 106 to 206; the sequence is EVVVEKKSSV…TLSKKEKEEA (101 aa). Positions 108-121 are enriched in basic and acidic residues; sequence VVEKKSSVSESRKS. The segment covering 122-132 has biased composition (basic residues); it reads DKGKKRFRKKS. A phosphoserine mark is found at Ser135 and Ser138. The span at 157–166 shows a compositional bias: acidic residues; sequence EEDDGSESEE. The span at 167-206 shows a compositional bias: basic and acidic residues; the sequence is ERVRDQKEREELEQHLKDRDTARTRKLTEQTLSKKEKEEA. Positions 414-577 constitute a Helicase ATP-binding domain; the sequence is LKAVEEHQVL…FDTAPIFSFP (164 aa). 427 to 434 serves as a coordination point for ATP; that stretch reads GDTGSGKT. A DEAH box motif is present at residues 524–527; sequence DEAH. Residues 600–775 enclose the Helicase C-terminal domain; it reads IVTILTIHVR…SVVLALKSLG (176 aa).

The protein belongs to the DEAD box helicase family. DEAH subfamily. PRP2 sub-subfamily. Widely expressed.

The enzyme catalyses ATP + H2O = ADP + phosphate + H(+). Functionally, involved in pre-mRNA splicing. This chain is Pre-mRNA-splicing factor ATP-dependent RNA helicase DEAH1, found in Arabidopsis thaliana (Mouse-ear cress).